A 403-amino-acid chain; its full sequence is RNA-binding motif, single-stranded-interacting protein 1 (403 aa).

A disordered region spans residues 30-56 (PAHPMAPPSPSTTSSNNNSSSSSNSGW). Over residues 40–54 (STTSSNNNSSSSSNS) the composition is skewed to low complexity. 2 RRM domains span residues 62–135 (TNLY…MAKQ) and 141–226 (TNLY…FADG). Residue T208 is modified to Phosphothreonine.

It is found in the nucleus. Functionally, single-stranded DNA binding protein that interacts with the region upstream of the MYC gene. Binds specifically to the DNA sequence motif 5'-[AT]CT[AT][AT]T-3'. Probably has a role in DNA replication. This is RNA-binding motif, single-stranded-interacting protein 1 from Rattus norvegicus (Rat).